We begin with the raw amino-acid sequence, 211 residues long: Glycerol-3-phosphate acyltransferase 2 (211 aa).

Helical transmembrane passes span 6 to 26 (FASL…VVVG), 57 to 77 (IIVF…PVIF), 82 to 102 (HYLC…PIFL), 124 to 144 (FFLI…MVSL), and 148 to 168 (ISVV…LSII).

Belongs to the PlsY family. Probably interacts with PlsX.

Its subcellular location is the cell membrane. It carries out the reaction an acyl phosphate + sn-glycerol 3-phosphate = a 1-acyl-sn-glycero-3-phosphate + phosphate. It participates in lipid metabolism; phospholipid metabolism. Its function is as follows. Catalyzes the transfer of an acyl group from acyl-phosphate (acyl-PO(4)) to glycerol-3-phosphate (G3P) to form lysophosphatidic acid (LPA). This enzyme utilizes acyl-phosphate as fatty acyl donor, but not acyl-CoA or acyl-ACP. The protein is Glycerol-3-phosphate acyltransferase 2 of Lactobacillus acidophilus (strain ATCC 700396 / NCK56 / N2 / NCFM).